A 421-amino-acid polypeptide reads, in one-letter code: UDP-N-acetylglucosamine 1-carboxyvinyltransferase (421 aa).

Phosphoenolpyruvate is bound at residue 22–23 (KN). Arg-92 provides a ligand contact to UDP-N-acetyl-alpha-D-glucosamine. Residue Cys-116 is the Proton donor of the active site. Position 116 is a 2-(S-cysteinyl)pyruvic acid O-phosphothioketal (Cys-116). UDP-N-acetyl-alpha-D-glucosamine contacts are provided by residues 121-125 (RPVDQ), Asp-304, and Ile-326.

The protein belongs to the EPSP synthase family. MurA subfamily.

It localises to the cytoplasm. It carries out the reaction phosphoenolpyruvate + UDP-N-acetyl-alpha-D-glucosamine = UDP-N-acetyl-3-O-(1-carboxyvinyl)-alpha-D-glucosamine + phosphate. It participates in cell wall biogenesis; peptidoglycan biosynthesis. In terms of biological role, cell wall formation. Adds enolpyruvyl to UDP-N-acetylglucosamine. This chain is UDP-N-acetylglucosamine 1-carboxyvinyltransferase, found in Bordetella avium (strain 197N).